Here is a 1104-residue protein sequence, read N- to C-terminus: Valine--tRNA ligase, mitochondrial (1104 aa).

The transit peptide at 1–47 directs the protein to the mitochondrion; that stretch reads MNKWLNTLSKTFTFRLLNCHYRRSLPLCQNFSLKKSLTHNQVRFFKM. S73 bears the Phosphoserine mark. Positions 99-119 are disordered; it reads KKNAAATTGASQKKPKKKKEV. The short motif at 190–200 is the 'HIGH' region element; it reads PNVTGALHIGH. Residues S294 and S332 each carry the phosphoserine modification. Residues 703 to 707 carry the 'KMSKS' region motif; sequence KMSKS. Residue K706 participates in ATP binding. S707 bears the Phosphoserine mark. T1003 bears the Phosphothreonine mark.

This sequence belongs to the class-I aminoacyl-tRNA synthetase family.

The protein resides in the cytoplasm. It localises to the mitochondrion. It catalyses the reaction tRNA(Val) + L-valine + ATP = L-valyl-tRNA(Val) + AMP + diphosphate. This is Valine--tRNA ligase, mitochondrial (VAS1) from Saccharomyces cerevisiae (strain ATCC 204508 / S288c) (Baker's yeast).